Here is a 453-residue protein sequence, read N- to C-terminus: UPF0210 protein Pcar_2119 (453 aa).

This sequence belongs to the UPF0210 family. Homodimer.

This is UPF0210 protein Pcar_2119 from Syntrophotalea carbinolica (strain DSM 2380 / NBRC 103641 / GraBd1) (Pelobacter carbinolicus).